The sequence spans 456 residues: Bifunctional protein GlmU (456 aa).

The pyrophosphorylase stretch occupies residues 1 to 229; it reads MLNSAMSVVI…ISETDGVNNR (229 aa). UDP-N-acetyl-alpha-D-glucosamine contacts are provided by residues 11–14, Lys25, Gln76, 81–82, 103–105, Gly140, Glu154, Asn169, and Asn227; these read LAAG, GT, and YGD. Position 105 (Asp105) interacts with Mg(2+). Position 227 (Asn227) interacts with Mg(2+). The tract at residues 230-250 is linker; sequence LQLSRLERIYQAEQAEKLLLS. The segment at 251–456 is N-acetyltransferase; the sequence is GVMLRDPARF…QGWQRPVKKK (206 aa). The UDP-N-acetyl-alpha-D-glucosamine site is built by Arg333 and Lys351. His363 acts as the Proton acceptor in catalysis. The UDP-N-acetyl-alpha-D-glucosamine site is built by Tyr366 and Asn377. Acetyl-CoA is bound by residues Ala380, 386–387, Ser405, Ala423, and Arg440; that span reads NY.

It in the N-terminal section; belongs to the N-acetylglucosamine-1-phosphate uridyltransferase family. This sequence in the C-terminal section; belongs to the transferase hexapeptide repeat family. As to quaternary structure, homotrimer. Requires Mg(2+) as cofactor.

It localises to the cytoplasm. It carries out the reaction alpha-D-glucosamine 1-phosphate + acetyl-CoA = N-acetyl-alpha-D-glucosamine 1-phosphate + CoA + H(+). It catalyses the reaction N-acetyl-alpha-D-glucosamine 1-phosphate + UTP + H(+) = UDP-N-acetyl-alpha-D-glucosamine + diphosphate. It functions in the pathway nucleotide-sugar biosynthesis; UDP-N-acetyl-alpha-D-glucosamine biosynthesis; N-acetyl-alpha-D-glucosamine 1-phosphate from alpha-D-glucosamine 6-phosphate (route II): step 2/2. It participates in nucleotide-sugar biosynthesis; UDP-N-acetyl-alpha-D-glucosamine biosynthesis; UDP-N-acetyl-alpha-D-glucosamine from N-acetyl-alpha-D-glucosamine 1-phosphate: step 1/1. Its pathway is bacterial outer membrane biogenesis; LPS lipid A biosynthesis. Its function is as follows. Catalyzes the last two sequential reactions in the de novo biosynthetic pathway for UDP-N-acetylglucosamine (UDP-GlcNAc). The C-terminal domain catalyzes the transfer of acetyl group from acetyl coenzyme A to glucosamine-1-phosphate (GlcN-1-P) to produce N-acetylglucosamine-1-phosphate (GlcNAc-1-P), which is converted into UDP-GlcNAc by the transfer of uridine 5-monophosphate (from uridine 5-triphosphate), a reaction catalyzed by the N-terminal domain. The sequence is that of Bifunctional protein GlmU from Salmonella gallinarum (strain 287/91 / NCTC 13346).